Here is a 1623-residue protein sequence, read N- to C-terminus: Histone-lysine N-methyltransferase set-9 (1623 aa).

Disordered regions lie at residues 1–102 (MADG…APQQ), 112–131 (AADA…RPTE), 198–227 (EDAV…SVAS), 448–600 (QRPG…VLRP), and 645–781 (TGQS…DEAA). Residues 62–71 (HQMENQEFYH) show a composition bias toward basic and acidic residues. Residues 77–100 (EPQQIPQIPVFQPAAYNPPNYVAP) show a composition bias toward low complexity. Over residues 206–227 (PGTQYRRNQQAGGGLPSTSVAS) the composition is skewed to polar residues. Residues 554 to 573 (MTQEEKNAHFARLTTDKEKP) are compositionally biased toward basic and acidic residues. A compositionally biased stretch (pro residues) spans 587–597 (PHVPPPPPPLV). Residues 645-669 (TGQSGSSAAARQRTVSGSAARAQTY) show a composition bias toward polar residues. The segment covering 723 to 733 (HRPRGRPKGTR) has biased composition (basic residues). Acidic residues predominate over residues 772 to 781 (SESEGIDEAA). Residues 786–834 (TMRCHCGMDHGDGDTIECEGCKTWQHMACMGLTLKSNTSKYKCEMCLPR) form a PHD-type zinc finger. The segment at 857 to 895 (AARKQKRKSEPVEQKQKSSQPSTSRKSAPMALQQPAEPR) is disordered. Residues 873-882 (KSSQPSTSRK) are compositionally biased toward polar residues. The SET domain maps to 965-1056 (MSSEVKRQPG…RNTEVTLPFD (92 aa)). Composition is skewed to basic and acidic residues over residues 1089–1157 (AERH…KKME) and 1172–1194 (AREE…EGKR). Disordered regions lie at residues 1089 to 1318 (AERH…NVAP) and 1356 to 1623 (LLAG…TRWN). A coiled-coil region spans residues 1093–1201 (RAMDHKKQEA…GKRKEARRRS (109 aa)). The span at 1242–1252 (TTQPSTSSFAT) shows a compositional bias: polar residues. A compositionally biased stretch (low complexity) spans 1282-1293 (ATTVATPKATTA). Residues 1364–1401 (FSEVRAQIEEENRMKERSRKREAKKKAVEKEKKEHRKE) are a coiled coil. 4 stretches are compositionally biased toward basic and acidic residues: residues 1365–1378 (SEVR…NRMK), 1388–1406 (KKAV…KKTN), 1413–1429 (KSEK…EKKP), and 1447–1464 (KKTE…ESSS). Polar residues predominate over residues 1533 to 1544 (SSSNTAPTTTIA).

Belongs to the class V-like SAM-binding methyltransferase superfamily. Predominantly expressed in the germline (at protein level).

It is found in the nucleus. It carries out the reaction L-lysyl-[histone] + S-adenosyl-L-methionine = N(6)-methyl-L-lysyl-[histone] + S-adenosyl-L-homocysteine + H(+). Its function is as follows. Histone methyltransferase. Might play a role in transcriptional regulation. Together with set-26, negatively regulates lifespan in a germline-independent, partially daf-16-dependent fashion. Together with set-26, plays a role in germline development and maintenance and might play a role in the restriction of the trimethylation mark on histone H3 'Lys-4'(H3K4me3) to target genes specifically in the germline. The chain is Histone-lysine N-methyltransferase set-9 from Caenorhabditis elegans.